We begin with the raw amino-acid sequence, 173 residues long: Ribulose bisphosphate carboxylase small subunit, chloroplastic 2 (173 aa).

A chloroplast-targeting transit peptide spans 1–33 (VVLSKECAKPLATPKVTLNKRGFATTIATKNRE).

The protein belongs to the RuBisCO small chain family. Heterohexadecamer of 8 large and 8 small subunits.

It localises to the plastid. The protein resides in the chloroplast. In terms of biological role, ruBisCO catalyzes two reactions: the carboxylation of D-ribulose 1,5-bisphosphate, the primary event in carbon dioxide fixation, as well as the oxidative fragmentation of the pentose substrate. Both reactions occur simultaneously and in competition at the same active site. Although the small subunit is not catalytic it is essential for maximal activity. This is Ribulose bisphosphate carboxylase small subunit, chloroplastic 2 from Acetabularia acetabulum (Mermaid's wine glass).